The sequence spans 54 residues: Large ribosomal subunit protein bL32c (54 aa).

It belongs to the bacterial ribosomal protein bL32 family.

It localises to the plastid. The protein localises to the chloroplast. This is Large ribosomal subunit protein bL32c from Cucumis sativus (Cucumber).